Here is a 194-residue protein sequence, read N- to C-terminus: Probable RNA 2'-phosphotransferase (194 aa).

The protein belongs to the KptA/TPT1 family.

Removes the 2'-phosphate from RNA via an intermediate in which the phosphate is ADP-ribosylated by NAD followed by a presumed transesterification to release the RNA and generate ADP-ribose 1''-2''-cyclic phosphate (APPR&gt;P). May function as an ADP-ribosylase. The sequence is that of Probable RNA 2'-phosphotransferase from Escherichia coli O45:K1 (strain S88 / ExPEC).